We begin with the raw amino-acid sequence, 189 residues long: GTPase HRas (189 aa).

GTP is bound at residue 10 to 17 (GARGVGKS). The Effector region motif lies at 32 to 40 (YDPTIEDSY). GTP-binding positions include 57–61 (DTAGQ) and 116–119 (NKCD). Residues Cys181 and Cys184 are each lipidated (S-palmitoyl cysteine; by host). At Cys186 the chain carries Cysteine methyl ester; by host. The S-farnesyl cysteine; by host moiety is linked to residue Cys186. A propeptide spans 187–189 (VLS) (removed in mature form).

Belongs to the small GTPase superfamily. Ras family.

The protein resides in the host cell membrane. It carries out the reaction GTP + H2O = GDP + phosphate + H(+). With respect to regulation, alternates between an inactive form bound to GDP and an active form bound to GTP. Activated by a guanine nucleotide-exchange factor (GEF) and inactivated by a GTPase-activating protein (GAP). In Mus musculus (Mouse), this protein is GTPase HRas (H-RAS).